Here is a 611-residue protein sequence, read N- to C-terminus: Ankyrin repeat protein SKIP35 (611 aa).

ANK repeat units follow at residues 292–322 (LFSN…EGGA), 323–353 (DNVN…RNSL), 356–384 (DVDL…NAIA), 385–414 (FLGP…DMEL), 416–442 (LALT…PPVL), and 445–478 (LSIE…DSTA).

In terms of assembly, interacts with SKP1A/ASK1.

This chain is Ankyrin repeat protein SKIP35 (SKIP35), found in Arabidopsis thaliana (Mouse-ear cress).